Consider the following 215-residue polypeptide: L-fuculose phosphate aldolase (215 aa).

Residues Gly28–Asn29, Thr43–Gly44, and Ser71–Ser72 each bind substrate. Glu73 (proton donor/acceptor) is an active-site residue. Zn(2+)-binding residues include Glu73, His92, His94, and His155.

Belongs to the aldolase class II family. AraD/FucA subfamily. In terms of assembly, homotetramer. Requires Zn(2+) as cofactor.

The catalysed reaction is L-fuculose 1-phosphate = (S)-lactaldehyde + dihydroxyacetone phosphate. The protein operates within carbohydrate degradation; L-fucose degradation; L-lactaldehyde and glycerone phosphate from L-fucose: step 3/3. Inhibited by phosphoglycolohydroxamate (PGH). Involved in the degradation of L-fucose and D-arabinose. Catalyzes the reversible cleavage of L-fuculose 1-phosphate (Fuc1P) to yield dihydroxyacetone phosphate (DHAP) and L-lactaldehyde. Also able to catalyze the reversible cleavage of D-ribulose 1-phosphate, but FucA has a higher affinity for L-fuculose 1-phosphate and L-lactaldehyde than for D-ribulose 1-phosphate and glycolaldehyde, respectively. FucA possesses a high specificity for the dihydroxyacetone phosphate (DHAP), but accepts a great variety of different aldehydes and has a strong preference for L-configurated alpha-hydroxy aldehydes. FucA generates a vicinal diol unit having the absolute (3R,4R)-cis configuration (D-erythro). The sequence is that of L-fuculose phosphate aldolase from Escherichia coli (strain K12).